The primary structure comprises 135 residues: Lactoylglutathione lyase (135 aa).

The VOC domain maps to 2–126; sequence RLLHTMLRVG…DGYKIELIEA (125 aa). Residue histidine 5 coordinates Ni(2+). A substrate-binding site is contributed by arginine 9. Residue glutamate 56 participates in Ni(2+) binding. Residues asparagine 60 and histidine 74 each contribute to the substrate site. The Ni(2+) site is built by histidine 74 and glutamate 122. Catalysis depends on glutamate 122, which acts as the Proton donor/acceptor.

This sequence belongs to the glyoxalase I family. In terms of assembly, homodimer. It depends on Ni(2+) as a cofactor.

The catalysed reaction is (R)-S-lactoylglutathione = methylglyoxal + glutathione. The protein operates within secondary metabolite metabolism; methylglyoxal degradation; (R)-lactate from methylglyoxal: step 1/2. Catalyzes the conversion of hemimercaptal, formed from methylglyoxal and glutathione, to S-lactoylglutathione. In Salmonella typhi, this protein is Lactoylglutathione lyase (gloA).